A 372-amino-acid chain; its full sequence is GTPase Obg (372 aa).

The Obg domain occupies 1-159 (MKFVDEATIE…RRLRLELKVL (159 aa)). The OBG-type G domain occupies 160–336 (ADVGLLGLPN…LIWALQDYLD (177 aa)). GTP is bound by residues 166–173 (GLPNAGKS), 191–195 (FTTLH), 213–216 (DIPG), 288–291 (NKLD), and 317–319 (SGL). Mg(2+)-binding residues include serine 173 and threonine 193. The tract at residues 341 to 372 (KEQITQDKADGSYVHEDPRFDTTRDAPPSGKD) is disordered.

It belongs to the TRAFAC class OBG-HflX-like GTPase superfamily. OBG GTPase family. In terms of assembly, monomer. It depends on Mg(2+) as a cofactor.

Its subcellular location is the cytoplasm. Functionally, an essential GTPase which binds GTP, GDP and possibly (p)ppGpp with moderate affinity, with high nucleotide exchange rates and a fairly low GTP hydrolysis rate. Plays a role in control of the cell cycle, stress response, ribosome biogenesis and in those bacteria that undergo differentiation, in morphogenesis control. This chain is GTPase Obg, found in Bordetella avium (strain 197N).